A 298-amino-acid chain; its full sequence is Tyrosine recombinase XerC (298 aa).

Residues 1-85 (MKPIAAFQEY…SLRSFYRYLT (85 aa)) form the Core-binding (CB) domain. The Tyr recombinase domain occupies 106 to 291 (HLPQFFYEAE…TMAHLKNEYM (186 aa)). Residues R146, K170, H243, R246, and H269 contribute to the active site. Residue Y278 is the O-(3'-phospho-DNA)-tyrosine intermediate of the active site.

This sequence belongs to the 'phage' integrase family. XerC subfamily. Forms a cyclic heterotetrameric complex composed of two molecules of XerC and two molecules of XerD.

It localises to the cytoplasm. Site-specific tyrosine recombinase, which acts by catalyzing the cutting and rejoining of the recombining DNA molecules. The XerC-XerD complex is essential to convert dimers of the bacterial chromosome into monomers to permit their segregation at cell division. It also contributes to the segregational stability of plasmids. This is Tyrosine recombinase XerC from Lacticaseibacillus paracasei (strain ATCC 334 / BCRC 17002 / CCUG 31169 / CIP 107868 / KCTC 3260 / NRRL B-441) (Lactobacillus paracasei).